Consider the following 64-residue polypeptide: Translational regulator CsrA 1 (64 aa).

It belongs to the CsrA/RsmA family. Homodimer; the beta-strands of each monomer intercalate to form a hydrophobic core, while the alpha-helices form wings that extend away from the core.

It is found in the cytoplasm. Functionally, a key translational regulator that binds mRNA to regulate translation initiation and/or mRNA stability. Mediates global changes in gene expression, shifting from rapid growth to stress survival by linking envelope stress, the stringent response and the catabolite repression systems. Usually binds in the 5'-UTR; binding at or near the Shine-Dalgarno sequence prevents ribosome-binding, repressing translation, binding elsewhere in the 5'-UTR can activate translation and/or stabilize the mRNA. Its function is antagonized by small RNA(s). The sequence is that of Translational regulator CsrA 1 from Pseudomonas syringae pv. tomato (strain ATCC BAA-871 / DC3000).